The sequence spans 132 residues: Small ribosomal subunit protein uS8c (132 aa).

Belongs to the universal ribosomal protein uS8 family. In terms of assembly, part of the 30S ribosomal subunit.

The protein localises to the plastid. Its subcellular location is the chloroplast. In terms of biological role, one of the primary rRNA binding proteins, it binds directly to 16S rRNA central domain where it helps coordinate assembly of the platform of the 30S subunit. The chain is Small ribosomal subunit protein uS8c (rps8) from Platanus occidentalis (Sycamore).